Here is a 1043-residue protein sequence, read N- to C-terminus: Rho GTPase-activating protein gacZ (1043 aa).

The segment at 1–44 is disordered; the sequence is MTTTNTSIFGPRVNNSKFNNNNNNNNNNNNNNNNTSNNNNSNII. A compositionally biased stretch (low complexity) spans 14–44; that stretch reads NNSKFNNNNNNNNNNNNNNNNTSNNNNSNII. Zn(2+)-binding residues include cysteine 71, cysteine 74, cysteine 82, cysteine 85, cysteine 91, histidine 95, histidine 103, and cysteine 107. Residues 71 to 107 form an MYND-type; atypical zinc finger; that stretch reads CVICKSKNVQVCTGCLMVYYCGAEHQNIDWPNHKSLC. Disordered stretches follow at residues 137–163, 199–532, 546–594, 614–690, 706–772, and 801–842; these read SGNR…NNNN, HLQQ…NNSN, DGLS…NGNR, FYQS…TNNN, NTSQ…QLSA, and NKVS…NNNN. Positions 201-225 are enriched in low complexity; that stretch reads QQQIQQTQQTQQQPPPTTTSIPTQP. Residues 241–253 show a composition bias toward polar residues; it reads SFKSSSSGDNTPI. 2 stretches are compositionally biased toward low complexity: residues 254 to 293 and 307 to 411; these read NQSP…NMSG and NSIN…TNEE. The span at 453–466 shows a compositional bias: polar residues; it reads GTLKQSSSSDSIYF. 2 stretches are compositionally biased toward low complexity: residues 467-532 and 547-594; these read NNNN…NNSN and GLSY…NGNR. Residues 615–625 are compositionally biased toward polar residues; that stretch reads YQSNKNQSNGY. A compositionally biased stretch (acidic residues) spans 644–671; sequence ENDDSHEECDDDDDDDDGGGQDGDDGLD. Low complexity-rich tracts occupy residues 726 to 736, 752 to 771, 801 to 821, and 829 to 842; these read DTQSQSTNSTT, SSDD…SQLS, NKVS…NNNN, and NNNN…NNNN. The stretch at 825–852 forms a coiled coil; the sequence is DHNENNNNNNNNINNNNNNNNNNIENII. Residues 855 to 1043 form the Rho-GAP domain; that stretch reads IPLEEAVKKS…FGIQTYNYNS (189 aa).

Its subcellular location is the cytoplasm. Rho GTPase-activating protein involved in the signal transduction pathway. This is Rho GTPase-activating protein gacZ (gacZ) from Dictyostelium discoideum (Social amoeba).